Here is a 381-residue protein sequence, read N- to C-terminus: uncharacterized protein (381 aa).

The next 9 helical transmembrane spans lie at leucine 59 to methionine 79, glycine 84 to methionine 104, valine 147 to alanine 167, serine 190 to isoleucine 210, leucine 222 to isoleucine 242, isoleucine 250 to tryptophan 270, histidine 284 to alanine 304, leucine 311 to phenylalanine 331, and valine 344 to leucine 364.

Belongs to the CDP-alcohol phosphatidyltransferase class-I family.

The protein resides in the membrane. This is an uncharacterized protein from Dictyostelium discoideum (Social amoeba).